The primary structure comprises 84 residues: Small ribosomal subunit protein bS20 (84 aa).

The protein belongs to the bacterial ribosomal protein bS20 family.

Functionally, binds directly to 16S ribosomal RNA. The chain is Small ribosomal subunit protein bS20 from Latilactobacillus sakei subsp. sakei (strain 23K) (Lactobacillus sakei subsp. sakei).